The primary structure comprises 222 residues: Large ribosomal subunit protein uL1 (222 aa).

The protein belongs to the universal ribosomal protein uL1 family. Part of the 50S ribosomal subunit.

Its function is as follows. Binds directly to 23S rRNA. Probably involved in E site tRNA release. Functionally, protein L1 is also a translational repressor protein, it controls the translation of its operon by binding to its mRNA. In Pyrobaculum islandicum (strain DSM 4184 / JCM 9189 / GEO3), this protein is Large ribosomal subunit protein uL1.